We begin with the raw amino-acid sequence, 282 residues long: Bifunctional protein FolD (282 aa).

NADP(+)-binding positions include 164–166 (GAS), Ile-189, and Ile-230.

This sequence belongs to the tetrahydrofolate dehydrogenase/cyclohydrolase family. In terms of assembly, homodimer.

The catalysed reaction is (6R)-5,10-methylene-5,6,7,8-tetrahydrofolate + NADP(+) = (6R)-5,10-methenyltetrahydrofolate + NADPH. It catalyses the reaction (6R)-5,10-methenyltetrahydrofolate + H2O = (6R)-10-formyltetrahydrofolate + H(+). The protein operates within one-carbon metabolism; tetrahydrofolate interconversion. Functionally, catalyzes the oxidation of 5,10-methylenetetrahydrofolate to 5,10-methenyltetrahydrofolate and then the hydrolysis of 5,10-methenyltetrahydrofolate to 10-formyltetrahydrofolate. The protein is Bifunctional protein FolD of Campylobacter jejuni subsp. jejuni serotype O:2 (strain ATCC 700819 / NCTC 11168).